The chain runs to 219 residues: MAMFYAHALGGYDENLHAFPGISSTVANDVRKYSVVSVYNNKYDIVKDKYMWCYSQVNKRYIGALLPMFECNEYLQIGDPIHDQEGNQISIITYRHKNYYALSGIGYESLDLCLEGVGIHHHVLETGNAVYGKVQHDYSTIKEKAKEMSTLSPGPIIDYHVWIGDCICQVTAVDVHGKEIMRMRFKKGAVLPIPNLVKVKLGENDTENLSSTISAAPSR.

The active-site Proton donor is histidine 17. Tyrosine 138 (shared with catalytic histidine of dimeric partner) is an active-site residue. Lysine 142 acts as the Proton acceptor; shared with catalytic histidine of dimeric partner in catalysis.

This sequence belongs to the poxin family. As to quaternary structure, homodimer.

The enzyme catalyses 2',3'-cGAMP + H2O = Gp(2'-5')Ap(3') + H(+). Its function is as follows. Nuclease that is responsible for viral evasion of host cGAS-STING innate immunity. Cleaves 2',3'-cGAMP which is produced by host cGAS following recognition of cytosolic DNA and blocks the subsequent 2',3'-cGAMP-mediated activation of TMEM173/STING, which normally spreads to adjacent cells and activates the interferon and NF-kappa-B immune responses. This is Poxin (OPG188) from Homo sapiens (Human).